The following is a 193-amino-acid chain: GTP cyclohydrolase-2 (193 aa).

Position 45–49 (45–49 (RIHSE)) interacts with GTP. The Zn(2+) site is built by Cys50, Cys61, and Cys63. GTP-binding positions include Gln66, 87 to 89 (EGR), and Thr109. Asp121 acts as the Proton acceptor in catalysis. The active-site Nucleophile is Arg123. GTP contacts are provided by Thr144 and Lys149.

Belongs to the GTP cyclohydrolase II family. Zn(2+) is required as a cofactor.

It carries out the reaction GTP + 4 H2O = 2,5-diamino-6-hydroxy-4-(5-phosphoribosylamino)-pyrimidine + formate + 2 phosphate + 3 H(+). The protein operates within cofactor biosynthesis; riboflavin biosynthesis; 5-amino-6-(D-ribitylamino)uracil from GTP: step 1/4. Catalyzes the conversion of GTP to 2,5-diamino-6-ribosylamino-4(3H)-pyrimidinone 5'-phosphate (DARP), formate and pyrophosphate. This is GTP cyclohydrolase-2 from Campylobacter hominis (strain ATCC BAA-381 / DSM 21671 / CCUG 45161 / LMG 19568 / NCTC 13146 / CH001A).